Here is a 325-residue protein sequence, read N- to C-terminus: Phospho-N-acetylmuramoyl-pentapeptide-transferase (325 aa).

The next 10 membrane-spanning stretches (helical) occupy residues 3–23, 48–68, 79–99, 106–126, 136–156, 174–194, 199–219, 223–243, 246–266, and 298–318; these read LMIY…PILI, GTPT…VFVV, AIFA…LKII, LKAY…GFYA, IIVP…PFII, GLAT…SYAT, LAVF…YNAY, VFMG…VAMM, LPLI…SVIL, and IVSI…LSLI.

Belongs to the glycosyltransferase 4 family. MraY subfamily. The cofactor is Mg(2+).

The protein resides in the cell membrane. It carries out the reaction UDP-N-acetyl-alpha-D-muramoyl-L-alanyl-gamma-D-glutamyl-meso-2,6-diaminopimeloyl-D-alanyl-D-alanine + di-trans,octa-cis-undecaprenyl phosphate = di-trans,octa-cis-undecaprenyl diphospho-N-acetyl-alpha-D-muramoyl-L-alanyl-D-glutamyl-meso-2,6-diaminopimeloyl-D-alanyl-D-alanine + UMP. It functions in the pathway cell wall biogenesis; peptidoglycan biosynthesis. Functionally, catalyzes the initial step of the lipid cycle reactions in the biosynthesis of the cell wall peptidoglycan: transfers peptidoglycan precursor phospho-MurNAc-pentapeptide from UDP-MurNAc-pentapeptide onto the lipid carrier undecaprenyl phosphate, yielding undecaprenyl-pyrophosphoryl-MurNAc-pentapeptide, known as lipid I. The polypeptide is Phospho-N-acetylmuramoyl-pentapeptide-transferase (Clostridium novyi (strain NT)).